Here is a 338-residue protein sequence, read N- to C-terminus: Activator of 90 kDa heat shock protein ATPase homolog 1 (338 aa).

K3 carries the N6-acetyllysine modification. K182 participates in a covalent cross-link: Glycyl lysine isopeptide (Lys-Gly) (interchain with G-Cter in SUMO1). The residue at position 193 (S193) is a Phosphoserine. Residue K203 forms a Glycyl lysine isopeptide (Lys-Gly) (interchain with G-Cter in SUMO2) linkage. Residue K212 is modified to N6-acetyllysine. Y223 is subject to Phosphotyrosine; by ABL. Residue S258 is modified to Phosphoserine.

It belongs to the AHA1 family. In terms of assembly, interacts with HSPCA/HSP90. Interacts (phosphorylated on Tyr-223) with HSP90AA1; the interaction activates HSP90AA1 ATPase activity. Interacts with HSP90AB1. Interacts with GCH1. Interacts with SRPK1. Interacts with FLCN. As to quaternary structure, (Microbial infection) Interacts with vesicular stomatitis virus glycoprotein (VSV G) (via cytoplasmic tail). Phosphorylation at Tyr-223 enhances binding to chaperone HSP90AA1. In terms of tissue distribution, expressed in numerous tissues, including brain, heart, skeletal muscle and kidney and, at lower levels, liver and placenta.

It localises to the cytoplasm. The protein resides in the cytosol. The protein localises to the endoplasmic reticulum. In terms of biological role, acts as a co-chaperone of HSP90AA1. Activates the ATPase activity of HSP90AA1 leading to increase in its chaperone activity. Competes with the inhibitory co-chaperone FNIP1 for binding to HSP90AA1, thereby providing a reciprocal regulatory mechanism for chaperoning of client proteins. Competes with the inhibitory co-chaperone TSC1 for binding to HSP90AA1, thereby providing a reciprocal regulatory mechanism for chaperoning of client proteins. The chain is Activator of 90 kDa heat shock protein ATPase homolog 1 (AHSA1) from Homo sapiens (Human).